The following is a 1474-amino-acid chain: Alpha-2-macroglobulin (1474 aa).

The first 23 residues, 1–23 (MGKNKLLHPSLVLLLLVLLPTDA), serve as a signal peptide directing secretion. Residues C48 and C86 are joined by a disulfide bond. N55 carries an N-linked (GlcNAc...) (complex) asparagine glycan. 2 N-linked (GlcNAc...) asparagine glycosylation sites follow: N70 and N247. 2 disulfide bridges follow: C251–C299 and C269–C287. N396 and N410 each carry an N-linked (GlcNAc...) asparagine glycan. Intrachain disulfides connect C470–C563, C595–C771, C642–C689, C821–C849, C847–C883, C921–C1321, C1079–C1127, and C1352–C1467. The segment at 690–728 (PQLQQYEMHGPEGLRVGFYESDVMGRGHARLVHVEEPHT) is bait region. Isoglutamyl lysine isopeptide (Gln-Lys) (interchain with K-? in other proteins) cross-links involve residues Q693 and Q694. Inhibitory stretches follow at residues 704 to 709 (RVGFYE), 719 to 723 (RLVHV), and 730 to 735 (TVRKYF). An N-linked (GlcNAc...) asparagine glycan is attached at N869. A cross-link (isoglutamyl cysteine thioester (Cys-Gln)) is located at residues 972 to 975 (CGEQ). N991 carries N-linked (GlcNAc...) asparagine glycosylation. An N-linked (GlcNAc...) (complex) asparagine glycan is attached at N1424.

It belongs to the protease inhibitor I39 (alpha-2-macroglobulin) family. Homotetramer; disulfide-linked. Secreted in plasma.

It is found in the secreted. Functionally, is able to inhibit all four classes of proteinases by a unique 'trapping' mechanism. This protein has a peptide stretch, called the 'bait region' which contains specific cleavage sites for different proteinases. When a proteinase cleaves the bait region, a conformational change is induced in the protein which traps the proteinase. The entrapped enzyme remains active against low molecular weight substrates (activity against high molecular weight substrates is greatly reduced). Following cleavage in the bait region, a thioester bond is hydrolyzed and mediates the covalent binding of the protein to the proteinase. This chain is Alpha-2-macroglobulin (A2M), found in Homo sapiens (Human).